We begin with the raw amino-acid sequence, 127 residues long: Protein chibby homolog 1 (127 aa).

The tract at residues 1–25 is disordered; it reads MPLFGSIFSPKKTPPRKSASLSNLH. Phosphoserine is present on residues Ser-9 and Ser-20. The interval 60 to 112 is minimal region for the interaction with PKD2; the sequence is VADSVISGGVDRRETQRLRKRNQQLEEENNLLRLKVDILLDMLSETTAESHLK. Residues 68–110 adopt a coiled-coil conformation; it reads GVDRRETQRLRKRNQQLEEENNLLRLKVDILLDMLSETTAESH. Positions 77–98 are leucine-zipper; mediates homodimerization; sequence LRKRNQQLEEENNLLRLKVDIL.

This sequence belongs to the chibby family. In terms of assembly, homodimer. Homodimerization is essential for nuclear localization and interaction with KPNA4 but is dispensable for interaction with CTNNB1. Interacts with polycystin-2/PKD2 and GM130. Interacts with the C-terminal region of CTNNB1. Interacts (C-terminus) with TCIM (C-terminus), TCIM competes with CTNNB1 for the interaction with CBY1. Interacts with FAM92A; this interaction facilitates targeting of FAM92A to cilium basal body. Interacts with CIBAR2. Interacts with KPNA4.

The protein localises to the nucleus speckle. The protein resides in the cytoplasm. Its subcellular location is the cytoskeleton. It is found in the cilium basal body. It localises to the microtubule organizing center. The protein localises to the centrosome. The protein resides in the centriole. Its subcellular location is the golgi apparatus. It is found in the trans-Golgi network. It localises to the cell projection. The protein localises to the cilium. The protein resides in the flagellum. Its subcellular location is the nucleus. Its function is as follows. Inhibits the Wnt/Wingless pathway by binding to CTNNB1/beta-catenin and inhibiting beta-catenin-mediated transcriptional activation through competition with TCF/LEF transcription factors. Has also been shown to play a role in regulating the intracellular trafficking of polycystin-2/PKD2 and possibly of other intracellular proteins. Promotes adipocyte and cardiomyocyte differentiation. This chain is Protein chibby homolog 1 (Cby1), found in Rattus norvegicus (Rat).